The primary structure comprises 272 residues: R3H domain-containing protein 4 (272 aa).

The segment at Leu141 to Tyr167 is disordered. Over residues Thr155–Pro165 the composition is skewed to basic and acidic residues. An R3H domain is found at Met191–His254.

It localises to the nucleus. The sequence is that of R3H domain-containing protein 4 (R3HDM4) from Bos taurus (Bovine).